The primary structure comprises 535 residues: T-complex protein 1 subunit beta (535 aa).

A2 carries the post-translational modification N-acetylalanine. S3 carries the post-translational modification Phosphoserine. K13 carries the N6-acetyllysine modification. Position 44 (G44) interacts with ADP. G44 provides a ligand contact to ATP. S60 is subject to Phosphoserine. D97 contacts Mg(2+). Positions 98, 99, 100, and 101 each coordinate ADP. Residues G98, T99, and T100 each coordinate ATP. K154 is subject to N6-acetyllysine. The ADP site is built by S168 and S169. K181 is modified (N6-acetyllysine). K248 participates in a covalent cross-link: Glycyl lysine isopeptide (Lys-Gly) (interchain with G-Cter in SUMO2). At S260 the chain carries Phosphoserine. T261 bears the Phosphothreonine mark. ADP-binding residues include G410, E495, and K500. ATP is bound by residues E495 and K500.

It belongs to the TCP-1 chaperonin family. Component of the chaperonin-containing T-complex (TRiC), a hexadecamer composed of two identical back-to-back stacked rings enclosing a protein folding chamber. Each ring is made up of eight different subunits: TCP1/CCT1, CCT2, CCT3, CCT4, CCT5, CCT6A/CCT6, CCT7, CCT8. Interacts with PACRG. Interacts with FLCN. Interacts with DLEC1. Interacts with SVEP1.

The protein resides in the cytoplasm. The catalysed reaction is ATP + H2O = ADP + phosphate + H(+). Its function is as follows. Component of the chaperonin-containing T-complex (TRiC), a molecular chaperone complex that assists the folding of actin, tubulin and other proteins upon ATP hydrolysis. The TRiC complex mediates the folding of WRAP53/TCAB1, thereby regulating telomere maintenance. As part of the TRiC complex may play a role in the assembly of BBSome, a complex involved in ciliogenesis regulating transports vesicles to the cilia. In Rattus norvegicus (Rat), this protein is T-complex protein 1 subunit beta (Cct2).